Reading from the N-terminus, the 1081-residue chain is Histone demethylase-like protein A (1081 aa).

The disordered stretch occupies residues 37 to 173 (QHLQHPSLPN…LSGNTDYARY (137 aa)). Over residues 66–81 (SPSCNESNESNGETSS) the composition is skewed to low complexity. Over residues 119–132 (DTSNILSGSATSVS) the composition is skewed to polar residues. Over residues 141 to 161 (NSTPPSTVNNVPSSSSITSDS) the composition is skewed to low complexity. An SWIRM domain is found at 192–287 (CVTAAYACRL…FGCVEIPPAL (96 aa)). Residues 902 to 940 (ATAQKKKEPPCSNGFSAPVSTSAHPTDASAPARSNNSFS) form a disordered region. A compositionally biased stretch (polar residues) spans 914 to 925 (NGFSAPVSTSAH). A DNA-binding region (HMG box) is located at residues 969 to 1049 (ARTGLNPFLL…TNTEIWDRWK (81 aa)).

The protein belongs to the flavin monoamine oxidase family.

Its subcellular location is the nucleus. Its function is as follows. H3K4 demethylase-like protein. Might not act as a H3K4 demethylase or is not the major H3K4 demethylase since its deletion does not affect whole genome H3K4 methylation. The chain is Histone demethylase-like protein A from Aspergillus fumigatus (strain ATCC MYA-4609 / CBS 101355 / FGSC A1100 / Af293) (Neosartorya fumigata).